A 93-amino-acid chain; its full sequence is UPF0147 protein MM_1385 (93 aa).

The protein belongs to the UPF0147 family.

This is UPF0147 protein MM_1385 from Methanosarcina mazei (strain ATCC BAA-159 / DSM 3647 / Goe1 / Go1 / JCM 11833 / OCM 88) (Methanosarcina frisia).